Consider the following 350-residue polypeptide: C5a anaphylatoxin chemotactic receptor 1 (350 aa).

Residues 1–37 lie on the Extracellular side of the membrane; the sequence is MDSFNYTTPDYGHYDDKDTLDLNTPVDKTSNTLRVPD. Residue Asn-5 is glycosylated (N-linked (GlcNAc...) asparagine). Positions 10–18 are required for CHIPS binding; it reads DYGHYDDKD. Residues Tyr-11 and Tyr-14 each carry the sulfotyrosine modification. Positions 21 to 30 are involved in C5a binding; the sequence is DLNTPVDKTS. The helical transmembrane segment at 38–64 threads the bilayer; sequence ILALVIFAVVFLVGVLGNALVVWVTAF. At 65–69 the chain is on the cytoplasmic side; that stretch reads EAKRT. The helical transmembrane segment at 70 to 93 threads the bilayer; sequence INAIWFLNLAVADFLSCLALPILF. Topologically, residues 94–110 are extracellular; the sequence is TSIVQHHHWPFGGAACS. A disulfide bridge links Cys-109 with Cys-188. Residues 111 to 132 traverse the membrane as a helical segment; sequence ILPSLILLNMYASILLLATISA. The Cytoplasmic segment spans residues 133-153; the sequence is DRFLLVFKPIWCQNFRGAGLA. Residues 154 to 174 traverse the membrane as a helical segment; it reads WIACAVAWGLALLLTIPSFLY. The Extracellular portion of the chain corresponds to 175–200; the sequence is RVVREEYFPPKVLCGVDYSHDKRRER. Residues 201–226 traverse the membrane as a helical segment; that stretch reads AVAIVRLVLGFLWPLLTLTICYTFIL. Topologically, residues 227–242 are cytoplasmic; that stretch reads LRTWSRRATRSTKTLK. The chain crosses the membrane as a helical span at residues 243–265; it reads VVVAVVASFFIFWLPYQVTGIMM. Residues 266–282 lie on the Extracellular side of the membrane; sequence SFLEPSSPTFLLLKKLD. The helical transmembrane segment at 283–303 threads the bilayer; it reads SLCVSFAYINCCINPIIYVVA. Over 304-350 the chain is Cytoplasmic; it reads GQGFQGRLRKSLPSLLRNVLTEESVVRESKSFTRSTVDTMAQKTQAV. 6 positions are modified to phosphoserine: Ser-314, Ser-317, Ser-327, Ser-332, Ser-334, and Ser-338.

This sequence belongs to the G-protein coupled receptor 1 family. In terms of assembly, homodimer. May also form higher-order oligomers. Interacts (when phosphorylated) with ARRB1 and ARRB2; the interaction is associated with internalization of C5aR. Interacts (via N-terminal domain) with S.aureus chemotaxis inhibitory protein (CHIPS); the interaction blocks the receptor and may thus inhibit the immune response. Sulfation plays a critical role in the association of C5aR with C5a, but no significant role in the ability of the receptor to transduce a signal and mobilize calcium in response to a small a small peptide agonist. Sulfation at Tyr-14 is important for CHIPS binding. Post-translationally, phosphorylated on serine residues in response to C5a binding, resulting in internalization of the receptor and short-term desensitization to the ligand. The key residues involved in this process are Ser-334 and Ser-338.

Its subcellular location is the cell membrane. The protein resides in the cytoplasmic vesicle. Its function is as follows. Receptor for the chemotactic and inflammatory peptide anaphylatoxin C5a. The ligand interacts with at least two sites on the receptor: a high-affinity site on the extracellular N-terminus, and a second site in the transmembrane region which activates downstream signaling events. Receptor activation stimulates chemotaxis, granule enzyme release, intracellular calcium release and superoxide anion production. This is C5a anaphylatoxin chemotactic receptor 1 (C5AR1) from Homo sapiens (Human).